Consider the following 786-residue polypeptide: Endonuclease MutS2 (786 aa).

Position 333–340 (333–340) interacts with ATP; sequence GPNTGGKT. Positions 682 to 709 are disordered; it reads EKIKPSKQSAAQRPVVKVSGGGMSGPST. Positions 711–786 constitute a Smr domain; it reads LDLRGERYDQ…GSGATIVNFK (76 aa).

The protein belongs to the DNA mismatch repair MutS family. MutS2 subfamily. In terms of assembly, homodimer. Binds to stalled ribosomes, contacting rRNA.

Functionally, endonuclease that is involved in the suppression of homologous recombination and thus may have a key role in the control of bacterial genetic diversity. Acts as a ribosome collision sensor, splitting the ribosome into its 2 subunits. Detects stalled/collided 70S ribosomes which it binds and splits by an ATP-hydrolysis driven conformational change. Acts upstream of the ribosome quality control system (RQC), a ribosome-associated complex that mediates the extraction of incompletely synthesized nascent chains from stalled ribosomes and their subsequent degradation. Probably generates substrates for RQC. This is Endonuclease MutS2 from Lacticaseibacillus casei (strain BL23) (Lactobacillus casei).